The chain runs to 367 residues: Phosphoribosylaminoimidazole-succinocarboxamide synthase (367 aa).

Belongs to the SAICAR synthetase family.

The catalysed reaction is 5-amino-1-(5-phospho-D-ribosyl)imidazole-4-carboxylate + L-aspartate + ATP = (2S)-2-[5-amino-1-(5-phospho-beta-D-ribosyl)imidazole-4-carboxamido]succinate + ADP + phosphate + 2 H(+). It participates in purine metabolism; IMP biosynthesis via de novo pathway; 5-amino-1-(5-phospho-D-ribosyl)imidazole-4-carboxamide from 5-amino-1-(5-phospho-D-ribosyl)imidazole-4-carboxylate: step 1/2. The sequence is that of Phosphoribosylaminoimidazole-succinocarboxamide synthase from Saccharophagus degradans (strain 2-40 / ATCC 43961 / DSM 17024).